The following is a 444-amino-acid chain: MPSIILPPKPTALQKPHINLAVVGHVDNGKSTLVGRLLYETGYVDEKGFKEIEEMAKKMGKEDFAFAWILDRFKEERERGVTIEATHVGFETNKLFITIIDLPGHRDFVKNMIVGASQADAALFVISARPGEFETAIGPQGQGREHLFLIRTLGIQQLVVAVNKMDVVNYDQKRYEQVKSEVSKLLKLLGYDPSKIHFVPVSAVKGDNVRTKSSNTPWYNGPTLLEVLDTFQPPPRPTDKPLRLPIQDVFSITGAGTVVVGRVETGVLKAGDRVVVVPPAKVGDVRSIETHHMKLEQAQPGDNVGVNVRGINKEDVKRGDVLGKVDNIPTVTEEIIARIVVLWHPTAIGPGYAPVMHIHTATVPVQITELISKLDPRTGQAVEQKPQFIKQGDVAIVKIKPLKPVVAEKFSDFPPLGRFALRDMGRTIAAGQILEVKPAQVQIK.

The tr-type G domain occupies 15 to 236 (KPHINLAVVG…VLDTFQPPPR (222 aa)). The tract at residues 24–31 (GHVDNGKS) is G1. 24–31 (GHVDNGKS) lines the GTP pocket. Serine 31 contributes to the Mg(2+) binding site. The tract at residues 80–84 (GVTIE) is G2. The interval 101 to 104 (DLPG) is G3. GTP is bound by residues 101–105 (DLPGH) and 163–166 (NKMD). The tract at residues 163 to 166 (NKMD) is G4. Residues 202–204 (SAV) form a G5 region.

It belongs to the TRAFAC class translation factor GTPase superfamily. Classic translation factor GTPase family. EF-Tu/EF-1A subfamily.

It is found in the cytoplasm. It catalyses the reaction GTP + H2O = GDP + phosphate + H(+). Functionally, GTP hydrolase that promotes the GTP-dependent binding of aminoacyl-tRNA to the A-site of ribosomes during protein biosynthesis. In Pyrobaculum arsenaticum (strain DSM 13514 / JCM 11321 / PZ6), this protein is Elongation factor 1-alpha.